Here is a 62-residue protein sequence, read N- to C-terminus: Temporin-CDYb (62 aa).

An N-terminal signal peptide occupies residues 1–22; sequence MFTLKKSLLLLFFLGTINLSLC. The propeptide occupies 23-45; sequence EEERDADEEERRDDPEERAVQVE. L60 carries the post-translational modification Leucine amide.

Belongs to the frog skin active peptide (FSAP) family. Temporin subfamily. As to expression, expressed by the skin glands.

Its subcellular location is the secreted. Antimicrobial peptide. Has low activity against the Gram-positive bacterium S.aureus (MIC&gt;100 uM) and the Gram-negative bacterium E.coli (MIC&gt;100 uM). Has weak hemolytic activity against human erythrocytes. This is Temporin-CDYb from Rana dybowskii (Dybovsky's frog).